Consider the following 801-residue polypeptide: Endonuclease MutS2 (801 aa).

336–343 serves as a coordination point for ATP; it reads GPNTGGKT. A disordered region spans residues 696 to 721; sequence AQQSKAKQKQQKIVKTKTASGSARAT. A compositionally biased stretch (basic residues) spans 701–710; sequence AKQKQQKIVK. Residues 726–801 form the Smr domain; it reads LDLRGVRYEA…GDGATIAELS (76 aa).

Belongs to the DNA mismatch repair MutS family. MutS2 subfamily. As to quaternary structure, homodimer. Binds to stalled ribosomes, contacting rRNA.

Functionally, endonuclease that is involved in the suppression of homologous recombination and thus may have a key role in the control of bacterial genetic diversity. Its function is as follows. Acts as a ribosome collision sensor, splitting the ribosome into its 2 subunits. Detects stalled/collided 70S ribosomes which it binds and splits by an ATP-hydrolysis driven conformational change. Acts upstream of the ribosome quality control system (RQC), a ribosome-associated complex that mediates the extraction of incompletely synthesized nascent chains from stalled ribosomes and their subsequent degradation. Probably generates substrates for RQC. In Leuconostoc citreum (strain KM20), this protein is Endonuclease MutS2.